A 227-amino-acid chain; its full sequence is UPF0758 protein PG_0894 (227 aa).

Residues 104 to 227 enclose the MPN domain; sequence SITDSRMAYR…YFSFADEGLL (124 aa). Residues H175, H177, and D188 each coordinate Zn(2+). The short motif at 175 to 188 is the JAMM motif element; sequence HNHPSGTVRPSEQD.

Belongs to the UPF0758 family.

The sequence is that of UPF0758 protein PG_0894 from Porphyromonas gingivalis (strain ATCC BAA-308 / W83).